We begin with the raw amino-acid sequence, 306 residues long: Ribonuclease Z (306 aa).

His63, His65, Asp67, His68, His141, Asp211, and His269 together coordinate Zn(2+). Residue Asp67 is the Proton acceptor of the active site.

The protein belongs to the RNase Z family. Homodimer. Requires Zn(2+) as cofactor.

It carries out the reaction Endonucleolytic cleavage of RNA, removing extra 3' nucleotides from tRNA precursor, generating 3' termini of tRNAs. A 3'-hydroxy group is left at the tRNA terminus and a 5'-phosphoryl group is left at the trailer molecule.. Zinc phosphodiesterase, which displays some tRNA 3'-processing endonuclease activity. Probably involved in tRNA maturation, by removing a 3'-trailer from precursor tRNA. The chain is Ribonuclease Z from Staphylococcus haemolyticus (strain JCSC1435).